The sequence spans 205 residues: Holliday junction branch migration complex subunit RuvA (205 aa).

Residues 1–64 (MIAHLRGELV…EDALTLYGFL (64 aa)) form a domain I region. Residues 65–143 (TQAEYDLFEL…AVPAGGGGVP (79 aa)) form a domain II region. The flexible linker stretch occupies residues 144–153 (DGLPVAVAPA). Residues 153–205 (AGDAWAEASEALIALGYSRGEAAAALARVRAEAGEAPSVETLVRLALKQLYRG) are domain III.

Belongs to the RuvA family. In terms of assembly, homotetramer. Forms an RuvA(8)-RuvB(12)-Holliday junction (HJ) complex. HJ DNA is sandwiched between 2 RuvA tetramers; dsDNA enters through RuvA and exits via RuvB. An RuvB hexamer assembles on each DNA strand where it exits the tetramer. Each RuvB hexamer is contacted by two RuvA subunits (via domain III) on 2 adjacent RuvB subunits; this complex drives branch migration. In the full resolvosome a probable DNA-RuvA(4)-RuvB(12)-RuvC(2) complex forms which resolves the HJ.

The protein resides in the cytoplasm. Its function is as follows. The RuvA-RuvB-RuvC complex processes Holliday junction (HJ) DNA during genetic recombination and DNA repair, while the RuvA-RuvB complex plays an important role in the rescue of blocked DNA replication forks via replication fork reversal (RFR). RuvA specifically binds to HJ cruciform DNA, conferring on it an open structure. The RuvB hexamer acts as an ATP-dependent pump, pulling dsDNA into and through the RuvAB complex. HJ branch migration allows RuvC to scan DNA until it finds its consensus sequence, where it cleaves and resolves the cruciform DNA. The protein is Holliday junction branch migration complex subunit RuvA of Symbiobacterium thermophilum (strain DSM 24528 / JCM 14929 / IAM 14863 / T).